The sequence spans 390 residues: Probable purine permease 10 (390 aa).

Helical transmembrane passes span 44-64 (WLRV…ATIL), 78-98 (LATV…ILSF), 117-137 (VLVY…YSIG), 140-160 (YLPV…NAFF), 169-189 (LTPI…LLAF), 204-224 (YVKG…VLSL), 241-261 (VMDM…VGLF), 287-307 (LVWT…LIFE), 312-332 (FSNA…VIIF), and 336-356 (MNGL…SYVY). A disordered region spans residues 370-390 (EITTTESPDPPEAEESTWQSK).

This sequence belongs to the purine permeases (TC 2.A.7.14) family.

The protein resides in the membrane. The protein is Probable purine permease 10 (PUP10) of Arabidopsis thaliana (Mouse-ear cress).